The chain runs to 1255 residues: TBC1 domain family member 1 (1255 aa).

A Phosphoserine modification is found at Ser146. Positions 208-228 are disordered; the sequence is RTDWEAPTGQPSAPGPRPMRK. A Phosphoserine; by PKB/AKT1 modification is found at Ser229. Position 231 is a phosphoserine; by AMPK (Ser231). A PID domain is found at 238-398; it reads LAFRKEFQDA…LHKLCERIEG (161 aa). Ser489 bears the Phosphoserine; by PKB/AKT1 mark. Residue Ser497 is modified to Phosphoserine. Phosphothreonine; by PKB/AKT1 is present on Thr499. 8 positions are modified to phosphoserine: Ser501, Ser519, Ser521, Ser559, Ser560, Ser564, Ser565, and Ser579. 2 disordered regions span residues 509 to 544 and 559 to 581; these read GNKARGLQDHSASVDLDSSTSSTLSNTSKELSMGDK and SSDDLSSDSEGHIAEESALLSPQ. The segment covering 519-539 has biased composition (low complexity); that stretch reads SASVDLDSSTSSTLSNTSKEL. Thr590 is subject to Phosphothreonine. Disordered stretches follow at residues 595–614 and 621–681; these read PVECPAPPEPAQSSPGVSQR and SVST…GNAV. Position 608 is a phosphoserine (Ser608). Position 621 is a phosphoserine; by PKB/AKT1 (Ser621). 2 positions are modified to phosphoserine: Ser660 and Ser661. Polar residues predominate over residues 670 to 679; that stretch reads HNSSGEQSGN. Ser697 is subject to Phosphoserine; by PKB/AKT1. Phosphoserine occurs at positions 698 and 699. Ser700 is modified (phosphoserine; by AMPK). The segment at 764–786 is disordered; that stretch reads DSPSRYEDYSELGELPPRSPLEP. Phosphoserine is present on residues Ser782 and Ser1028. The Rab-GAP TBC domain maps to 887–1081; that stretch reads GVPRHHRGEI…RVFDMIFLQG (195 aa). Tyr1039 bears the Phosphotyrosine mark. Thr1218 is modified (phosphothreonine). Residues 1233–1255 are disordered; the sequence is LRRQSARPSTPEPDCTQLEPTGD.

In terms of assembly, interacts with APPL2 (via BAR domain); interaction is dependent of TBC1D1 phosphorylation at Ser-229; interaction diminishes the phosphorylation of TBC1D1 at Thr-590, resulting in inhibition of SLC2A4/GLUT4 translocation and glucose uptake. Post-translationally, insulin-stimulated phosphorylation by AKT family kinases stimulates SLC2A4/GLUT4 translocation. As to expression, expressed in highest levels in hematopoietic cells, testis and kidney.

Its subcellular location is the nucleus. In terms of biological role, may act as a GTPase-activating protein for Rab family protein(s). May play a role in the cell cycle and differentiation of various tissues. Involved in the trafficking and translocation of GLUT4-containing vesicles and insulin-stimulated glucose uptake into cells. The polypeptide is TBC1 domain family member 1 (Tbc1d1) (Mus musculus (Mouse)).